A 263-amino-acid chain; its full sequence is R-spondin-1 (263 aa).

A signal peptide spans 1-20; the sequence is MRLGLCVVALVLSWTHLTIS. 2 FU repeats span residues 34–85 and 91–135; these read AEGS…GYFD and MNKC…GSSA. Cystine bridges form between cysteine 40-cysteine 47, cysteine 44-cysteine 53, cysteine 56-cysteine 75, cysteine 79-cysteine 94, cysteine 97-cysteine 105, cysteine 102-cysteine 111, cysteine 114-cysteine 125, cysteine 129-cysteine 142, cysteine 148-cysteine 190, cysteine 159-cysteine 166, and cysteine 199-cysteine 206. The N-linked (GlcNAc...) asparagine glycan is linked to asparagine 137. In terms of domain architecture, TSP type-1 spans 147 to 207; sequence QCEMSEWSPW…RCTVRRVPCP (61 aa). Residues tryptophan 153 and tryptophan 156 are each glycosylated (C-linked (Man) tryptophan). The segment at 206–263 is disordered; sequence CPEGQKRRKGGQGRRENANRNLARKESKEAGAGSRRRKGQQQQQQQGTVGPLTSAGPA. Basic and acidic residues predominate over residues 218–234; sequence GRRENANRNLARKESKE.

The protein belongs to the R-spondin family. Interacts with the extracellular domain of FZD8 and LRP6. It however does not form a ternary complex with FZD8 and LRP6. Interacts with WNT1. Binds heparin. Interacts with ZNRF3; promoting indirect interaction between ZNRF3 and LGR4 and membrane clearance of ZNRF3. Interacts with LGR4, LGR5 and LGR6. Identified in a complex composed of RNF43, LGR5 and RSPO1. Interacts (via FU repeats) with KREM1. In terms of processing, C-, and N-glycosylated. N-glycosylation at Asn-137, negatively influences its secretion and enhancing effect on Wnt/beta-catenin signaling. C-mannosylation at Trp-156 by DPY19L3 is required for its secretion and regulates the enhancing activity of Wnt signaling. In terms of tissue distribution, abundantly expressed in adrenal glands, ovary, testis, thyroid and trachea but not in bone marrow, spinal cord, stomach, leukocytes colon, small intestine, prostate, thymus and spleen.

It localises to the secreted. Its subcellular location is the nucleus. Activator of the canonical Wnt signaling pathway by acting as a ligand for LGR4-6 receptors. Upon binding to LGR4-6 (LGR4, LGR5 or LGR6), LGR4-6 associate with phosphorylated LRP6 and frizzled receptors that are activated by extracellular Wnt receptors, triggering the canonical Wnt signaling pathway to increase expression of target genes. Also regulates the canonical Wnt/beta-catenin-dependent pathway and non-canonical Wnt signaling by acting as an inhibitor of ZNRF3, an important regulator of the Wnt signaling pathway. Acts as a ligand for frizzled FZD8 and LRP6. May negatively regulate the TGF-beta pathway. Has a essential roles in ovary determination. Regulates Wnt signaling by antagonizing DKK1/KREM1-mediated internalization of LRP6 through an interaction with KREM1. This is R-spondin-1 (RSPO1) from Homo sapiens (Human).